The chain runs to 363 residues: S-methylmethionine--homocysteine S-methyltransferase BHMT2 (363 aa).

The Hcy-binding domain maps to 11-305; sequence KGILERLDSG…YHIRAIAEEL (295 aa). Zn(2+)-binding residues include cysteine 208, cysteine 290, and cysteine 291. The residue at position 321 (serine 321) is a Phosphoserine.

As to quaternary structure, homotetramer. Zn(2+) serves as cofactor. Expressed in fetal heart, lung, liver, kidney and eye.

It carries out the reaction S-methyl-L-methionine + L-homocysteine = 2 L-methionine + H(+). Its pathway is amino-acid biosynthesis; L-methionine biosynthesis via de novo pathway; L-methionine from L-homocysteine (BhmT route): step 1/1. Functionally, involved in the regulation of homocysteine metabolism. Converts homocysteine to methionine using S-methylmethionine (SMM) as a methyl donor. This Mus musculus (Mouse) protein is S-methylmethionine--homocysteine S-methyltransferase BHMT2 (Bhmt2).